The following is a 330-amino-acid chain: Ornithine carbamoyltransferase (330 aa).

Residues 57–60 (STRT), Q84, R108, and 135–138 (HPTQ) contribute to the carbamoyl phosphate site. Residues N168, D232, and 236–237 (SM) each bind L-ornithine. Carbamoyl phosphate contacts are provided by residues 273-274 (CL) and R318.

Belongs to the aspartate/ornithine carbamoyltransferase superfamily. OTCase family.

It is found in the cytoplasm. It catalyses the reaction carbamoyl phosphate + L-ornithine = L-citrulline + phosphate + H(+). Its pathway is amino-acid biosynthesis; L-arginine biosynthesis; L-arginine from L-ornithine and carbamoyl phosphate: step 1/3. Functionally, reversibly catalyzes the transfer of the carbamoyl group from carbamoyl phosphate (CP) to the N(epsilon) atom of ornithine (ORN) to produce L-citrulline. The polypeptide is Ornithine carbamoyltransferase (Alkaliphilus metalliredigens (strain QYMF)).